Consider the following 1781-residue polypeptide: Atrochrysone carboxylic acid synthase (1781 aa).

Residues 15–253 (TRDLFRRLHV…KHVALPVYAG (239 aa)) are N-terminal acylcarrier protein transacylase domain (SAT). The 434-residue stretch at 390-823 (QSKIAIVGMA…GGNTSVVVEE (434 aa)) folds into the Ketosynthase family 3 (KS3) domain. Active-site for beta-ketoacyl synthase activity residues include Cys-563, His-698, and His-741. The malonyl-CoA:ACP transacylase (MAT) domain stretch occupies residues 925–1244 (FAFTGQGASH…SLGLLHCAGL (320 aa)). Residues 1312 to 1631 (TSTVQQIIEE…RVLLNRFFSA (320 aa)) are product template (PT) domain. Residues 1316–1451 (QQIIEETFSD…ADIVYGLPTD (136 aa)) are N-terminal hotdog fold. A PKS/mFAS DH domain is found at 1316 to 1626 (QQIIEETFSD…FRRYPRVLLN (311 aa)). His-1348 acts as the Proton acceptor; for dehydratase activity in catalysis. The interval 1478-1626 (IANRLSHNMA…FRRYPRVLLN (149 aa)) is C-terminal hotdog fold. The active-site Proton donor; for dehydratase activity is Asp-1537. A disordered region spans residues 1633–1653 (DSDTSKHTSATDVSPPKKVVQ). The 78-residue stretch at 1703–1780 (VDSDSTASKA…DLKAWLMEYY (78 aa)) folds into the Carrier domain. O-(pantetheine 4'-phosphoryl)serine is present on Ser-1740.

The catalysed reaction is holo-[ACP] + 8 malonyl-CoA + 8 H(+) = atrochrysone carboxyl-[ACP] + 8 CO2 + 8 CoA + 2 H2O. Its pathway is secondary metabolite biosynthesis. Atrochrysone carboxylic acid synthase; part of the gene cluster that mediates the biosynthesis of the dimeric xanthones cryptosporioptides. The pathway begins with the synthesis of atrochrysone thioester by the polyketide synthase dmx-nrPKS. The atrochrysone carboxyl ACP thioesterase dmxR1 then breaks the thioester bond and releases the atrochrysone carboxylic acid from dmx-nrPKS. Atrochrysone carboxylic acid is decarboxylated by the decarboxylase dmxR15, and oxidized by the anthrone oxygenase dmxR16 to yield emodin. Emodin is then reduced to emodin hydroquinone by the oxidoreductase dmxR7. A-ring reduction by the short chain dehydrogenase dmxR18, dehydration by the scytalone dehydratase-like protein dmxR17 and probable spontaneous re-oxidation, results in overall deoxygenation to chrysophanol. Baeyer-Villiger oxidation by the Baeyer-Villiger monooxygenase (BVMO) dmxR6 then yields monodictylactone in equilibrium with monodictyphenone. In the case of the cryptosporioptides biosynthesis, monodictylactone is reduced at C-12 to an alcohol (by the short chain dehydrogenases dmxR12 or dmxR8) and hydroxylated at C-5 by dmxR9, yielding the electron-rich aromatic which could eliminate H(2)O to form the ortho-quinonemethide, followed by tautomerisation to paraquinone and complete the formal reduction to produce the 10-methylgroup. Conjugate addition of C-4a-OH to the resulting paraquinone by the monooxygenase dmxR10 then gives cyclohexadienone, which is then reduced at C-5 by the short chain dehydrogenase dmxR3 to give the dihydroxanthone. The 6,7-epoxide in the cryptosporioptides could be introduced by the cytochrome P450 monooxygenase dmxL3. The highly reducing PKS dmxL2 manufactures butyrate, which is further carboxylated by dmxL1 to form ethylmalonate. It is not yet clear whether the carboxylation occurs while the butyrate is attached to the ACP of dmxL2, but this unusual fungal metabolite could then be esterified to O-5 by the O-acetyltransferase dmxR13. Finally, dimerization performed by dmxR5 gives the observed dimers cryptosporioptides A, B and C as the final products of the pathway. In Cryptosporiopsis sp. (strain 8999), this protein is Atrochrysone carboxylic acid synthase.